Consider the following 1167-residue polypeptide: Pesticidal crystal protein Cry21Aa (1167 aa).

This sequence belongs to the delta endotoxin family.

Its function is as follows. Endotoxin with nematicidal activity. This Bacillus thuringiensis protein is Pesticidal crystal protein Cry21Aa (cry21Aa).